A 146-amino-acid chain; its full sequence is Deoxyuridine 5'-triphosphate nucleotidohydrolase (146 aa).

Residues 66-68 (RSG), Asn-79, 83-85 (TVD), and Lys-93 each bind substrate.

The protein belongs to the dUTPase family. Mg(2+) serves as cofactor.

The enzyme catalyses dUTP + H2O = dUMP + diphosphate + H(+). Its pathway is pyrimidine metabolism; dUMP biosynthesis; dUMP from dCTP (dUTP route): step 2/2. In terms of biological role, this enzyme is involved in nucleotide metabolism: it produces dUMP, the immediate precursor of thymidine nucleotides and it decreases the intracellular concentration of dUTP so that uracil cannot be incorporated into DNA. The polypeptide is Deoxyuridine 5'-triphosphate nucleotidohydrolase (Fusobacterium nucleatum subsp. nucleatum (strain ATCC 25586 / DSM 15643 / BCRC 10681 / CIP 101130 / JCM 8532 / KCTC 2640 / LMG 13131 / VPI 4355)).